A 102-amino-acid polypeptide reads, in one-letter code: Large ribosomal subunit protein bL21 (102 aa).

The segment covering 79–91 has biased composition (basic residues); that stretch reads RKDSKRKKGHRQP. Residues 79–102 form a disordered region; sequence RKDSKRKKGHRQPYTKLTIDKINA.

It belongs to the bacterial ribosomal protein bL21 family. As to quaternary structure, part of the 50S ribosomal subunit. Contacts protein L20.

Functionally, this protein binds to 23S rRNA in the presence of protein L20. This is Large ribosomal subunit protein bL21 from Staphylococcus saprophyticus subsp. saprophyticus (strain ATCC 15305 / DSM 20229 / NCIMB 8711 / NCTC 7292 / S-41).